The sequence spans 290 residues: Probable aquaporin PIP2-7 (290 aa).

Transmembrane regions (helical) follow at residues 45-65 and 79-99; these read ALIA…ATVI and GVGY…LVYC. Residues 109 to 111 carry the NPA 1 motif; it reads NPA. Transmembrane regions (helical) follow at residues 128 to 148, 168 to 188, and 202 to 222; these read VLYV…VKGI, SAAG…YTVF, and IPVL…LATI. Residues 230-232 carry the NPA 2 motif; the sequence is NPA. Residues 252 to 272 traverse the membrane as a helical segment; that stretch reads IFWVGPVIGAFLAAAYHKLVL.

The protein belongs to the MIP/aquaporin (TC 1.A.8) family. PIP (TC 1.A.8.11) subfamily. Expressed in roots.

It is found in the cell membrane. Its function is as follows. Aquaporins facilitate the transport of water and small neutral solutes across cell membranes. This is Probable aquaporin PIP2-7 (PIP2-7) from Oryza sativa subsp. japonica (Rice).